Reading from the N-terminus, the 520-residue chain is Nonsense-mediated mRNA decay factor SMG9 (520 aa).

Residues 1–143 (MSESGHSQPG…KGEKEGQRPT (143 aa)) are disordered. Residue Ser-2 is modified to N-acetylserine. 5 positions are modified to phosphoserine: Ser-2, Ser-4, Ser-7, Ser-32, and Ser-53. A compositionally biased stretch (basic and acidic residues) spans 36–53 (GRERDYIAPWERERRDGS). A compositionally biased stretch (pro residues) spans 78-94 (QPPPPAAPAAPPAPAPL). Low complexity predominate over residues 109 to 121 (GPAATTSTSTPEG). Residues 122–133 (TAPPPPAAPVPP) show a composition bias toward pro residues. Ser-451 bears the Phosphoserine mark.

It belongs to the SMG9 family. As to quaternary structure, self-associates to form homodimers and forms heterodimers with SMG8; these assembly forms may represent SMG1C intermediate forms. Component of the SMG1C complex composed of SMG1, SMG8 and SMG9. Self-associates to form homodimers and forms heterodimers with SMG8; these assembly forms may represent SMG1C intermediate forms. Interacts with DHX34; the interaction is RNA-independent. Post-translationally, phosphorylated by SMG1.

Involved in nonsense-mediated decay (NMD) of mRNAs containing premature stop codons. Is recruited by release factors to stalled ribosomes together with SMG1 and SMG8 (forming the SMG1C protein kinase complex) and, in the SMG1C complex, is required for the efficient association between SMG1 and SMG8. Plays a role in brain, heart, and eye development. In Bos taurus (Bovine), this protein is Nonsense-mediated mRNA decay factor SMG9.